Reading from the N-terminus, the 237-residue chain is MQKQAELYRGKAKTVYSTENPDLLVLEFRNDTSAGDGARIEQFDRKGMLNNKFNYFIMSKLAEAGIPTQMERLLSDTECLVKKLDMVPVECVVRNRAAGSLVKRLGIEEGIELNPPLFDLFLKNDAMHDPMVNESYCETFGWVSKENLARMKELTYKANDVLKKLFDDAGLILVDFKLEFGLYKGEVVLGDEFSPDGSRLWDKETLEKMDKDRFRQSLGGLIEAYEAVARRLGVQLD.

The protein belongs to the SAICAR synthetase family.

The enzyme catalyses 5-amino-1-(5-phospho-D-ribosyl)imidazole-4-carboxylate + L-aspartate + ATP = (2S)-2-[5-amino-1-(5-phospho-beta-D-ribosyl)imidazole-4-carboxamido]succinate + ADP + phosphate + 2 H(+). The protein operates within purine metabolism; IMP biosynthesis via de novo pathway; 5-amino-1-(5-phospho-D-ribosyl)imidazole-4-carboxamide from 5-amino-1-(5-phospho-D-ribosyl)imidazole-4-carboxylate: step 1/2. In Shigella sonnei (strain Ss046), this protein is Phosphoribosylaminoimidazole-succinocarboxamide synthase.